The primary structure comprises 316 residues: Serpentine receptor class delta-48 (316 aa).

A run of 7 helical transmembrane segments spans residues 8 to 28, 42 to 62, 89 to 109, 127 to 147, 185 to 205, 236 to 256, and 269 to 289; these read FFYI…IFVI, FLLC…LLQL, LFYV…FITI, VVII…QIDL, FLLT…GFFI, TLQS…YFVV, and ILPV…LYSV.

The protein belongs to the nematode receptor-like protein srd family.

Its subcellular location is the membrane. This Caenorhabditis elegans protein is Serpentine receptor class delta-48 (srd-48).